The primary structure comprises 477 residues: Pentatricopeptide repeat-containing protein At5g47360 (477 aa).

9 PPR repeats span residues 129-163 (NVKT…NVCA), 164-198 (DTVA…GLYP), 199-233 (DVIT…DCVL), 234-264 (NSVT…MEKE), 273-307 (NAVT…GCMP), 308-343 (NRVT…GGVS), 344-378 (LSEC…GVRP), 379-413 (DGLA…DVKS), and 416-450 (DSDI…KMRL).

This sequence belongs to the PPR family. P subfamily.

The sequence is that of Pentatricopeptide repeat-containing protein At5g47360 from Arabidopsis thaliana (Mouse-ear cress).